A 414-amino-acid polypeptide reads, in one-letter code: Aspartic protease-like protein pynH (414 aa).

Positions 1–19 are cleaved as a signal peptide; it reads MFPCSRIWSLLVAAATASA. The 368-residue stretch at 43 to 410 folds into the Peptidase A1 domain; it reads FLTDIALGTP…DFEKLQVGIA (368 aa). N-linked (GlcNAc...) asparagine glycans are attached at residues asparagine 93, asparagine 102, asparagine 140, asparagine 151, asparagine 173, asparagine 202, asparagine 221, asparagine 258, asparagine 272, asparagine 335, and asparagine 366. A disulfide bond links cysteine 333 and cysteine 371.

The protein belongs to the peptidase A1 family.

It participates in secondary metabolite biosynthesis. Aspartic protease-like protein; part of the gene cluster that mediates the biosynthesis of pyranonigrins, a family of antioxidative compounds. The first step of pyranonigrins biosynthesis is performed by the hybrid PKS-NRPS synthetase that condenses 6 malonyl-CoA units to an acetyl starter unit, to form a 1,3,5-trioxotetradecane-6,8-dienyl-ACP. The enoyl reductase (ER) domain of pynA is likely to be functional during the first two rounds of polyketide chain extension, to generate the saturated C-C bonds of the alkyl side chain. PynA subsequently forms the amide bond between the acyl chain and L-serine. Although pynA has a terminal reductase domain, it appears to require the thioesterase pynI for the release of the straight-chain intermediate from pynA via the formation of a tetramic acid pyranonigrin J. The methyltransferase pynC then coverts pyranonigrin J to pyranonigrin I via N-methylation. The FAD-dependent monooxygenase pynG catalyzes an epoxidation-mediated cyclization to form the dihydro-gamma-pyrone moiety, followed by pynD-catalyzed oxidation of the alcohol to the ketone and enolization to yield the characteristic tetramic acid-fused gamma-pyrone core of pyranonigrin H. Pyranonigrin H is substrate of pynH for dehydration-mediated exo-methylene formation from the serine side chain to produce pyranonigrin E, before the oxidase pynE reduces the exo-methylene of pyranonigrin E into a pendant methyl to form pyranonigrin G. The FAD-linked oxidoreductase pynB performs the reverse reaction and converts pyranonigrin G back to pyranonigrin E. This Aspergillus niger (strain ATCC MYA-4892 / CBS 513.88 / FGSC A1513) protein is Aspartic protease-like protein pynH.